Here is a 61-residue protein sequence, read N- to C-terminus: uncharacterized protein (61 aa).

This is an uncharacterized protein from Acidianus convivator (ABV).